A 163-amino-acid polypeptide reads, in one-letter code: Superoxide dismutase [Mn] (163 aa).

Positions 2, 50, 134, and 138 each coordinate Mn(2+).

Belongs to the iron/manganese superoxide dismutase family. It depends on Mn(2+) as a cofactor.

It carries out the reaction 2 superoxide + 2 H(+) = H2O2 + O2. In terms of biological role, destroys superoxide anion radicals which are normally produced within the cells and which are toxic to biological systems. The protein is Superoxide dismutase [Mn] (sodA) of Mycobacterium kansasii.